Consider the following 90-residue polypeptide: uncharacterized protein (90 aa).

This is an uncharacterized protein from Bos taurus (Bovine).